We begin with the raw amino-acid sequence, 567 residues long: Malate synthase, glyoxysomal (567 aa).

R182 functions as the Proton acceptor in the catalytic mechanism. D468 serves as the catalytic Proton donor. The short motif at S565 to L567 is the Microbody targeting signal element.

The protein belongs to the malate synthase family.

The protein localises to the glyoxysome. It carries out the reaction glyoxylate + acetyl-CoA + H2O = (S)-malate + CoA + H(+). It participates in carbohydrate metabolism; glyoxylate cycle; (S)-malate from isocitrate: step 2/2. The polypeptide is Malate synthase, glyoxysomal (Ricinus communis (Castor bean)).